Consider the following 154-residue polypeptide: MDNLKEKPLSYNINNNNLNNNNNNNNNNNNNNNNINNNINNNNFKYVSFSESLEDIGYQNQYIIDKDEDYYIQEQRYIRQNNQSDDEEDFNNNNYEDSIKISLIQKSFIKNKKNKIIITTIVVLLMIAVSLGLILAWQGVFDQIHNNNNNSKDE.

The segment at 1–37 (MDNLKEKPLSYNINNNNLNNNNNNNNNNNNNNNNINN) is disordered. A compositionally biased stretch (low complexity) spans 12-37 (NINNNNLNNNNNNNNNNNNNNNNINN). N-linked (GlcNAc...) asparagine glycosylation is present at Asn-82. A helical membrane pass occupies residues 116–136 (IIITTIVVLLMIAVSLGLILA). A glycan (N-linked (GlcNAc...) asparagine) is linked at Asn-149.

It localises to the membrane. This is an uncharacterized protein from Dictyostelium discoideum (Social amoeba).